Reading from the N-terminus, the 647-residue chain is LIM domain kinase 1 (647 aa).

LIM zinc-binding domains lie at 25–75 (CASC…CKKD) and 84–137 (CHGC…CGHC). A PDZ domain is found at 165 to 258 (LVSIPASSHG…LLQLTLEHDP (94 aa)). Serine 210 carries the phosphoserine modification. At threonine 229 the chain carries Phosphothreonine. The disordered stretch occupies residues 260-319 (DTLGHGLGPETSPLSSPAYTPSGEAGSSARQKPVLRSCSIDRSPGAGSLGSPASQRKDLG). 4 positions are modified to phosphoserine: serine 298, serine 302, serine 307, and serine 310. A compositionally biased stretch (low complexity) spans 302 to 313 (SPGAGSLGSPAS). Position 323 is a phosphoserine; by MAPKAPK2 (serine 323). Serine 337 is subject to Phosphoserine. The Protein kinase domain occupies 339-604 (LIHGEVLGKG…PSFVKLEHWL (266 aa)). ATP is bound by residues 345–353 (LGKGCFGQA) and lysine 368. Aspartate 460 is a catalytic residue. Residue threonine 508 is modified to Phosphothreonine; by ROCK1 and PAK1.

This sequence belongs to the protein kinase superfamily. TKL Ser/Thr protein kinase family. Interacts (via LIM domain) with the cytoplasmic domain of NRG1. Interacts with NISCH. Interacts with RLIM and RNF6. Self-associates to form homodimers. Interacts with HSP90AA1; this interaction promotes LIMK1 dimerization and subsequent transphosphorylation. Interacts with CDKN1C. Interacts with SSH1. Interacts with ROCK1. Interacts (via LIM zinc-binding domains) with FAM89B/LRAP25 (via LRR repeat). Forms a tripartite complex with CDC42BPA, CDC42BPB and FAM89B/LRAP25. Autophosphorylated. Phosphorylated on Thr-508 by ROCK1 and PAK1, resulting in activation. Phosphorylated by PAK4 which increases the ability of LIMK1 to phosphorylate cofilin. Phosphorylated at Ser-323 by MAPKAPK2 during activation of VEGFA-induced signaling, which results in activation of LIMK1 and promotion of actin reorganization, cell migration, and tubule formation of endothelial cells. Dephosphorylated and inactivated by SSH1. Phosphorylated by CDC42BP. In terms of processing, ubiquitinated. 'Lys-48'-linked polyubiquitination by RNF6 leads to proteasomal degradation through the 26S proteasome, modulating LIMK1 levels in the growth cone and its effect on axonal outgrowth. Also polyubiquitinated by RLIM. In terms of tissue distribution, highest expression in both adult and fetal nervous system. Detected ubiquitously throughout the different regions of adult brain, with highest levels in the cerebral cortex. Expressed to a lesser extent in heart and skeletal muscle.

The protein resides in the cytoplasm. Its subcellular location is the nucleus. It localises to the cytoskeleton. The protein localises to the cell projection. It is found in the lamellipodium. It catalyses the reaction L-seryl-[protein] + ATP = O-phospho-L-seryl-[protein] + ADP + H(+). The enzyme catalyses L-threonyl-[protein] + ATP = O-phospho-L-threonyl-[protein] + ADP + H(+). Functionally, serine/threonine-protein kinase that plays an essential role in the regulation of actin filament dynamics. Acts downstream of several Rho family GTPase signal transduction pathways. Activated by upstream kinases including ROCK1, PAK1 and PAK4, which phosphorylate LIMK1 on a threonine residue located in its activation loop. LIMK1 subsequently phosphorylates and inactivates the actin binding/depolymerizing factors cofilin-1/CFL1, cofilin-2/CFL2 and destrin/DSTN, thereby preventing the cleavage of filamentous actin (F-actin), and stabilizing the actin cytoskeleton. In this way LIMK1 regulates several actin-dependent biological processes including cell motility, cell cycle progression, and differentiation. Phosphorylates TPPP on serine residues, thereby promoting microtubule disassembly. Stimulates axonal outgrowth and may be involved in brain development. In terms of biological role, has a dominant negative effect on actin cytoskeletal changes. Required for atypical chemokine receptor ACKR2-induced phosphorylation of cofilin (CFL1). This is LIM domain kinase 1 (LIMK1) from Homo sapiens (Human).